The primary structure comprises 1284 residues: Peroxisomal ATPase PEX1 (1284 aa).

A disordered region spans residues 339 to 373; sequence SPKQQQDKSKQGVLLPDKEKQLSKSPDHKQISSNR. Over residues 343 to 373 the composition is skewed to basic and acidic residues; sequence QQDKSKQGVLLPDKEKQLSKSPDHKQISSNR. ATP-binding positions include 600 to 607 and 882 to 889; these read GGKGSGKS and GPPGTGKT. Phosphoserine is present on residues S1182, S1210, and S1212. Residues 1261–1284 form a disordered region; it reads FQNPKKRKNQSGTVFRTGQKVTLA. The span at 1270 to 1284 shows a compositional bias: polar residues; that stretch reads QSGTVFRTGQKVTLA.

Belongs to the AAA ATPase family. As to quaternary structure, homooligomer; homooligomerizes in the cytosol, interaction with PEX6 promotes dissociation of the homooligomer. Interacts with PEX6; forming the PEX1-PEX6 AAA ATPase complex, which is composed of a heterohexamer formed by a trimer of PEX1-PEX6 dimers. Interacts indirectly with PEX26, via its interaction with PEX6.

It is found in the cytoplasm. The protein resides in the cytosol. The protein localises to the peroxisome membrane. It catalyses the reaction ATP + H2O = ADP + phosphate + H(+). Functionally, component of the PEX1-PEX6 AAA ATPase complex, a protein dislocase complex that mediates the ATP-dependent extraction of the PEX5 receptor from peroxisomal membranes, an essential step for PEX5 recycling. Specifically recognizes PEX5 monoubiquitinated at 'Cys-11', and pulls it out of the peroxisome lumen through the PEX2-PEX10-PEX12 retrotranslocation channel. Extraction by the PEX1-PEX6 AAA ATPase complex is accompanied by unfolding of the TPR repeats and release of bound cargo from PEX5. The protein is Peroxisomal ATPase PEX1 of Mus musculus (Mouse).